The primary structure comprises 186 residues: TATA box-binding protein-like 1 (186 aa).

The protein belongs to the TBP family. As to quaternary structure, binds TFIIA and TFIIB.

The protein localises to the cytoplasm. It localises to the nucleus. Functionally, part of a specialized transcription system that mediates the transcription of most ribosomal proteins through the 5'-TCT-3' motif which is a core promoter element at these genes. Seems to also mediate the transcription of NF1. Does not bind the TATA box. This Bos taurus (Bovine) protein is TATA box-binding protein-like 1 (TBPL1).